A 70-amino-acid chain; its full sequence is DNA-binding transcriptional activator AlpA (70 aa).

Residues 12-31 (LPAVIQKTGMARATIYDWLN) constitute a DNA-binding region (H-T-H motif).

In terms of biological role, positive regulator of the expression of the slpA gene. When overexpressed, leads to suppression of the capsule overproduction and UV sensitivity phenotypes of cells mutant for the Lon ATP-dependent protease. Part of the cryptic P4-like prophage CP4-57. Overexpression of AlpA leads to excision of the CP4-57 prophage by IntA. This inactivates ssrA (the gene upstream of the prophage) that encodes tmRNA which is required to rescue stalled ribosomes in a process known as trans-translation. The protein is DNA-binding transcriptional activator AlpA of Escherichia coli (strain K12).